The primary structure comprises 201 residues: Ribonuclease HII (201 aa).

The region spanning 14 to 201 (NLIAGVDEVG…KPVKRILGIE (188 aa)) is the RNase H type-2 domain. A divalent metal cation-binding residues include Asp20, Glu21, and Asp112.

The protein belongs to the RNase HII family. The cofactor is Mn(2+). Requires Mg(2+) as cofactor.

The protein localises to the cytoplasm. It catalyses the reaction Endonucleolytic cleavage to 5'-phosphomonoester.. In terms of biological role, endonuclease that specifically degrades the RNA of RNA-DNA hybrids. The sequence is that of Ribonuclease HII from Photobacterium profundum (strain SS9).